Consider the following 184-residue polypeptide: Small ribosomal subunit protein bS16 (184 aa).

Over residues 150 to 160 (KKAAEAAEKAA) the composition is skewed to basic and acidic residues. The interval 150–184 (KKAAEAAEKAAAEAPAEEATEAPAEEAAATEAAAE) is disordered. Residues 164 to 173 (PAEEATEAPA) show a composition bias toward acidic residues. Low complexity predominate over residues 174–184 (EEAAATEAAAE).

The protein belongs to the bacterial ribosomal protein bS16 family.

The protein is Small ribosomal subunit protein bS16 of Bacteroides thetaiotaomicron (strain ATCC 29148 / DSM 2079 / JCM 5827 / CCUG 10774 / NCTC 10582 / VPI-5482 / E50).